Here is a 37-residue protein sequence, read N- to C-terminus: Potassium channel toxin alpha-KTx 1.3 (37 aa).

At glutamine 1 the chain carries Pyrrolidone carboxylic acid. 3 disulfides stabilise this stretch: cysteine 7–cysteine 28, cysteine 13–cysteine 33, and cysteine 17–cysteine 35. The interval 26 to 33 is interaction with Ca(2+)-activated K(+) channels; the sequence is GKCMGKKC.

Belongs to the short scorpion toxin superfamily. Potassium channel inhibitor family. Alpha-KTx 01 subfamily. In terms of tissue distribution, expressed by the venom gland.

It is found in the secreted. Its function is as follows. Blocks selectively the high conductance calcium-activated (maxi-K) potassium channels (KCa1.1/KCNMA1). This is Potassium channel toxin alpha-KTx 1.3 from Hottentotta tamulus (Eastern Indian scorpion).